Consider the following 255-residue polypeptide: NAD kinase (255 aa).

Asp-44 functions as the Proton acceptor in the catalytic mechanism. NAD(+) contacts are provided by residues 44–45, His-49, 114–115, Asp-144, Ala-152, 155–160, and Gln-216; these read DG, NE, and SAYNLS.

The protein belongs to the NAD kinase family. The cofactor is a divalent metal cation.

It is found in the cytoplasm. It catalyses the reaction NAD(+) + ATP = ADP + NADP(+) + H(+). Functionally, involved in the regulation of the intracellular balance of NAD and NADP, and is a key enzyme in the biosynthesis of NADP. Catalyzes specifically the phosphorylation on 2'-hydroxyl of the adenosine moiety of NAD to yield NADP. In Rickettsia rickettsii (strain Iowa), this protein is NAD kinase.